Here is a 122-residue protein sequence, read N- to C-terminus: Small ribosomal subunit protein uS13 (122 aa).

The interval 95 to 122 is disordered; the sequence is GLPVRGQRTHTNARTRKGPAKPIAGKKK.

Belongs to the universal ribosomal protein uS13 family. As to quaternary structure, part of the 30S ribosomal subunit. Forms a loose heterodimer with protein S19. Forms two bridges to the 50S subunit in the 70S ribosome.

Its function is as follows. Located at the top of the head of the 30S subunit, it contacts several helices of the 16S rRNA. In the 70S ribosome it contacts the 23S rRNA (bridge B1a) and protein L5 of the 50S subunit (bridge B1b), connecting the 2 subunits; these bridges are implicated in subunit movement. Contacts the tRNAs in the A and P-sites. This is Small ribosomal subunit protein uS13 from Xanthobacter autotrophicus (strain ATCC BAA-1158 / Py2).